Here is a 275-residue protein sequence, read N- to C-terminus: 3-methyl-2-oxobutanoate hydroxymethyltransferase (275 aa).

Positions 44 and 83 each coordinate Mg(2+). 3-methyl-2-oxobutanoate-binding positions include 44 to 45 (DS), aspartate 83, and lysine 113. Mg(2+) is bound at residue glutamate 115. Catalysis depends on glutamate 182, which acts as the Proton acceptor.

It belongs to the PanB family. As to quaternary structure, homodecamer; pentamer of dimers. It depends on Mg(2+) as a cofactor.

It is found in the cytoplasm. It carries out the reaction 3-methyl-2-oxobutanoate + (6R)-5,10-methylene-5,6,7,8-tetrahydrofolate + H2O = 2-dehydropantoate + (6S)-5,6,7,8-tetrahydrofolate. Its pathway is cofactor biosynthesis; (R)-pantothenate biosynthesis; (R)-pantoate from 3-methyl-2-oxobutanoate: step 1/2. Catalyzes the reversible reaction in which hydroxymethyl group from 5,10-methylenetetrahydrofolate is transferred onto alpha-ketoisovalerate to form ketopantoate. In Clostridium botulinum (strain Loch Maree / Type A3), this protein is 3-methyl-2-oxobutanoate hydroxymethyltransferase.